The sequence spans 1163 residues: Voltage-gated inwardly rectifying potassium channel KCNH2 (1163 aa).

Topologically, residues 1-405 (MPVRRGHVAP…RIHRWTILHY (405 aa)) are cytoplasmic. In terms of domain architecture, PAS spans 17 to 88 (TIIRKFEGQS…AAQIAQALLG (72 aa)). One can recognise a PAC domain in the interval 92 to 144 (RKVEIAFYRKDGSCFLCLVDVVPVKNEDGAVIMFILNFEVVMEKDMVGSPAHD). Residues 235-286 (VGPASASPVASIPGPHPSPRAQSLNPDASGSSCSLARTRSRESCASVRRASS) form a disordered region. 2 positions are modified to phosphoserine: Ser-239 and Ser-245. The segment covering 254–271 (RAQSLNPDASGSSCSLAR) has biased composition (polar residues). 4 positions are modified to phosphoserine: Ser-285, Ser-286, Ser-322, and Ser-353. Residues 406 to 426 (SPFKAVWDWLILLLVIYTAVF) form a helical membrane-spanning segment. The Extracellular portion of the chain corresponds to 427 to 452 (TPYSAAFLLKETEDGSQAPDCGYACQ). The helical transmembrane segment at 453–473 (PLAVVDLLVDIMFIVDILINF) threads the bilayer. The Cytoplasmic segment spans residues 474 to 497 (RTTYVNANEEVVSHPGRIAVHYFK). Residues 498 to 518 (GWFLIDMVAAIPFDLLIFGSG) traverse the membrane as a helical segment. At 519–522 (SEEL) the chain is on the extracellular side. A helical; Voltage-sensor membrane pass occupies residues 523–543 (IGLLKTARLLRLVRVARKLDR). At 544–549 (YSEYGA) the chain is on the cytoplasmic side. Residues 550-570 (AVLFLLMCTFALIAHWLACIW) traverse the membrane as a helical segment. The Extracellular portion of the chain corresponds to 571–613 (YAIGNMEQPHMDSHIGWLHNLGDQIGKPYNSSGLGGPSIKDKY). Asn-600 carries an N-linked (GlcNAc...) asparagine glycan. The pore-forming intramembrane region spans 614-634 (VTALYFTFSSLTSVGFGNVSP). A Selectivity filter motif is present at residues 626–631 (SVGFGN). Residues 635–640 (NTNSEK) lie on the Extracellular side of the membrane. Residues 641–661 (IFSICVMLIGSLMYASIFGNV) form a helical membrane-spanning segment. Residues 662 to 1163 (SAIIQRLYSG…LHRHGSDPGS (502 aa)) lie on the Cytoplasmic side of the membrane. Positions 744 to 844 (PFRGATKGCL…IHRDDLLEVL (101 aa)) are cNMP-binding domain. Phosphoserine is present on residues Ser-873 and Ser-876. Disordered stretches follow at residues 873 to 992 (SPSS…NPLS), 1015 to 1043 (ELPR…GDVE), and 1126 to 1163 (AGAP…DPGS). Residues 885–894 (RQRKRKLSFR) are compositionally biased toward basic residues. A compositionally biased stretch (low complexity) spans 932–943 (GESPSSGPSSPE). Arg-1018 carries the omega-N-methylarginine modification. A coiled-coil region spans residues 1039–1066 (RGDVESRLDALQRQLNRLETRLSADMAT). Ser-1141 is subject to Phosphoserine.

The protein belongs to the potassium channel family. H (Eag) (TC 1.A.1.20) subfamily. Kv11.1/KCNH2 sub-subfamily. In terms of assembly, the potassium channel is probably composed of a homo- or heterotetrameric complex of pore-forming alpha subunits that can associate with modulating beta subunits. Interacts with DNAJB12 and DNAJB14; chaperones DNAJB12 and DNAJB14 promote tetramerization. Heteromultimer with KCNH6/ERG2 and KCNH7/ERG3. Interacts with ALG10B. Forms a stable complex with KCNE1 or KCNE2, and that this heteromultimerization regulates Inward rectifier potassium channel activity. Interacts with CANX. The core-glycosylated, but not the fully glycosylated form interacts with RNF207. Interacts with NDFIP1 and NDFIP2; this interaction decreases the cell membrane expression by targeting KCNH2, through interaction with NEDD4L, for the degradation through the multivesicular bodies (MVBs)-lysosomal pathway. In terms of processing, phosphorylated on serine and threonine residues. Phosphorylation by PKA inhibits ion conduction. In terms of tissue distribution, highly expressed in brain and testis, slightly less so in heart, adrenal, retina and thymus. Detected at lower levels in lung, soleus, tibialis, and at very low levels in cornea and lens. A shorter transcript is detected in skeletal muscle. Found in pituitary.

The protein localises to the cell membrane. The enzyme catalyses K(+)(in) = K(+)(out). Functionally, pore-forming (alpha) subunit of voltage-gated inwardly rectifying potassium channel. Characterized by unusual gating kinetics by producing relatively small outward currents during membrane depolarization and large inward currents during subsequent repolarization which reflect a rapid inactivation during depolarization and quick recovery from inactivation but slow deactivation (closing) during repolarization. Channel properties are modulated by cAMP and subunit assembly. Forms a stable complex with KCNE1 or KCNE2, and that this heteromultimerization regulates inward rectifier potassium channel activity. This is Voltage-gated inwardly rectifying potassium channel KCNH2 from Rattus norvegicus (Rat).